We begin with the raw amino-acid sequence, 108 residues long: Nucleoid-associated protein BTH_I2220 (108 aa).

This sequence belongs to the YbaB/EbfC family. In terms of assembly, homodimer.

It localises to the cytoplasm. Its subcellular location is the nucleoid. Functionally, binds to DNA and alters its conformation. May be involved in regulation of gene expression, nucleoid organization and DNA protection. This is Nucleoid-associated protein BTH_I2220 from Burkholderia thailandensis (strain ATCC 700388 / DSM 13276 / CCUG 48851 / CIP 106301 / E264).